The primary structure comprises 411 residues: Adenylosuccinate synthetase (411 aa).

GTP-binding positions include 11-17 (GDEGKGK) and 39-41 (GHT). The Proton acceptor role is filled by D12. D12 and G39 together coordinate Mg(2+). IMP contacts are provided by residues 12–15 (DEGK), 37–40 (NAGH), T121, R135, Q215, T230, and R294. The active-site Proton donor is H40. 290-296 (TTTKRPR) serves as a coordination point for substrate. Residues R296, 322–324 (KLD), and 400–402 (STS) each bind GTP.

It belongs to the adenylosuccinate synthetase family. In terms of assembly, homodimer. Mg(2+) is required as a cofactor.

The protein localises to the cytoplasm. The catalysed reaction is IMP + L-aspartate + GTP = N(6)-(1,2-dicarboxyethyl)-AMP + GDP + phosphate + 2 H(+). Its pathway is purine metabolism; AMP biosynthesis via de novo pathway; AMP from IMP: step 1/2. Plays an important role in the de novo pathway of purine nucleotide biosynthesis. Catalyzes the first committed step in the biosynthesis of AMP from IMP. This chain is Adenylosuccinate synthetase, found in Helicobacter pylori (strain HPAG1).